The sequence spans 352 residues: Phosphate acyltransferase (352 aa).

The segment covering 328-339 has biased composition (basic and acidic residues); sequence ESFPGDAREREG. Positions 328 to 352 are disordered; sequence ESFPGDAREREGAQAPDAGTERVAS.

The protein belongs to the PlsX family. As to quaternary structure, homodimer. Probably interacts with PlsY.

The protein localises to the cytoplasm. The enzyme catalyses a fatty acyl-[ACP] + phosphate = an acyl phosphate + holo-[ACP]. The protein operates within lipid metabolism; phospholipid metabolism. Functionally, catalyzes the reversible formation of acyl-phosphate (acyl-PO(4)) from acyl-[acyl-carrier-protein] (acyl-ACP). This enzyme utilizes acyl-ACP as fatty acyl donor, but not acyl-CoA. This chain is Phosphate acyltransferase, found in Geobacter sp. (strain M21).